The primary structure comprises 425 residues: Glycosyl hydrolase family 109 protein 2 (425 aa).

Residues Asn29–Arg30, Glu51, Trp99–His102, Glu119–Val120, and Asn148 contribute to the NAD(+) site. Tyr177 serves as a coordination point for substrate. NAD(+)-binding positions include Phe194–Trp198 and Tyr211. Residues Tyr211–His214 and Tyr293 each bind substrate.

The protein belongs to the Gfo/Idh/MocA family. Glycosyl hydrolase 109 subfamily. It depends on NAD(+) as a cofactor.

Its function is as follows. Glycosidase. The polypeptide is Glycosyl hydrolase family 109 protein 2 (Bacteroides fragilis (strain YCH46)).